Here is a 352-residue protein sequence, read N- to C-terminus: C-C chemokine receptor type 5 (352 aa).

At methionine 1–alanine 30 the chain is on the extracellular side. Tyrosine 3 carries the post-translational modification Sulfotyrosine. A glycan (O-linked (GalNAc...) serine) is linked at serine 6. A sulfotyrosine mark is found at tyrosine 10 and tyrosine 14. Serine 17 carries O-linked (GalNAc...) serine glycosylation. Disulfide bonds link cysteine 20/cysteine 269 and cysteine 101/cysteine 178. A helical membrane pass occupies residues arginine 31–cysteine 58. The Cytoplasmic segment spans residues lysine 59–tyrosine 68. Residues leucine 69 to tyrosine 89 traverse the membrane as a helical segment. Topologically, residues alanine 90–lysine 102 are extracellular. The chain crosses the membrane as a helical span at residues valine 103–isoleucine 124. Over aspartate 125–threonine 141 the chain is Cytoplasmic. The helical transmembrane segment at valine 142–phenylalanine 166 threads the bilayer. The Extracellular portion of the chain corresponds to threonine 167–arginine 198. Residues asparagine 199–leucine 218 form a helical membrane-spanning segment. The Cytoplasmic segment spans residues lysine 219–arginine 235. The helical transmembrane segment at leucine 236–phenylalanine 260 threads the bilayer. Over glutamine 261–arginine 277 the chain is Extracellular. Residues alanine 278–glycine 301 form a helical membrane-spanning segment. The Cytoplasmic portion of the chain corresponds to glutamate 302–leucine 352. Residues cysteine 321 and cysteine 324 are each lipidated (S-palmitoyl cysteine). Positions proline 332–leucine 352 are disordered. Residues serine 336, serine 337, serine 342, and serine 349 each carry the phosphoserine; by BARK1 modification. Positions serine 337 to glutamine 346 are enriched in polar residues.

Belongs to the G-protein coupled receptor 1 family. As to quaternary structure, interacts with PRAF2. Efficient ligand binding to CCL3/MIP-1alpha and CCL4/MIP-1beta requires sulfation, O-glycosylation and sialic acid modifications. Glycosylation on Ser-6 is required for efficient binding of CCL4. Interacts with GRK2. Interacts with ARRB1 and ARRB2. Interacts with CNIH4. Interacts with S100A4; this interaction stimulates T-lymphocyte chemotaxis. In terms of processing, sulfated on at least 2 of the N-terminal tyrosines. Sulfation is required for efficient binding of the chemokines, CCL3 and CCL4. O-glycosylated, but not N-glycosylated. Ser-6 appears to be the major site. Also sialylated glycans present which contribute to chemokine binding. Ser-17 may also be glycosylated and, if so, with small moieties such as a T-antigen. Post-translationally, palmitoylation in the C-terminal is important for cell surface expression. In terms of processing, phosphorylation on serine residues in the C-terminal is stimulated by binding CC chemokines especially by APO-RANTES.

It localises to the cell membrane. In terms of biological role, receptor for a number of inflammatory CC-chemokines including CCL3/MIP-1-alpha, CCL4/MIP-1-beta and RANTES and subsequently transduces a signal by increasing the intracellular calcium ion level. May play a role in the control of granulocytic lineage proliferation or differentiation. Participates in T-lymphocyte migration to the infection site by acting as a chemotactic receptor. This Oryctolagus cuniculus (Rabbit) protein is C-C chemokine receptor type 5 (CCR5).